The sequence spans 180 residues: ATP-dependent protease subunit HslV (180 aa).

Residue threonine 7 is part of the active site. Na(+)-binding residues include alanine 162, cysteine 165, and threonine 168.

This sequence belongs to the peptidase T1B family. HslV subfamily. As to quaternary structure, a double ring-shaped homohexamer of HslV is capped on each side by a ring-shaped HslU homohexamer. The assembly of the HslU/HslV complex is dependent on binding of ATP.

It is found in the cytoplasm. It catalyses the reaction ATP-dependent cleavage of peptide bonds with broad specificity.. Its activity is regulated as follows. Allosterically activated by HslU binding. Functionally, protease subunit of a proteasome-like degradation complex believed to be a general protein degrading machinery. This Dichelobacter nodosus (strain VCS1703A) protein is ATP-dependent protease subunit HslV.